The chain runs to 418 residues: Putative ion-transport protein YfeO (418 aa).

12 helical membrane-spanning segments follow: residues 10-30, 54-74, 99-119, 120-140, 149-169, 186-206, 223-243, 258-278, 300-320, 322-342, 343-363, and 371-391; these read LLLS…LIVV, DSPI…GLVI, ALPG…SLGP, EHPI…RLLP, ILAS…AALI, LFAP…FFHP, ILSG…AVWC, VLVL…GGPV, DYFL…ASGF, GGRI…LHEH, VPAV…VLVV, and LFMA…CIVM.

This sequence belongs to the chloride channel (TC 2.A.49) family.

It localises to the cell membrane. The polypeptide is Putative ion-transport protein YfeO (Shigella sonnei (strain Ss046)).